The sequence spans 133 residues: S-adenosylmethionine decarboxylase proenzyme (133 aa).

Residue S64 is the Schiff-base intermediate with substrate; via pyruvic acid of the active site. The residue at position 64 (S64) is a Pyruvic acid (Ser); by autocatalysis. H69 functions as the Proton acceptor; for processing activity in the catalytic mechanism. C84 functions as the Proton donor; for catalytic activity in the catalytic mechanism.

The protein belongs to the prokaryotic AdoMetDC family. Type 1 subfamily. Heterotetramer of two alpha and two beta chains arranged as a dimer of alpha/beta heterodimers. Requires pyruvate as cofactor. Is synthesized initially as an inactive proenzyme. Formation of the active enzyme involves a self-maturation process in which the active site pyruvoyl group is generated from an internal serine residue via an autocatalytic post-translational modification. Two non-identical subunits are generated from the proenzyme in this reaction, and the pyruvate is formed at the N-terminus of the alpha chain, which is derived from the carboxyl end of the proenzyme. The post-translation cleavage follows an unusual pathway, termed non-hydrolytic serinolysis, in which the side chain hydroxyl group of the serine supplies its oxygen atom to form the C-terminus of the beta chain, while the remainder of the serine residue undergoes an oxidative deamination to produce ammonia and the pyruvoyl group blocking the N-terminus of the alpha chain.

The catalysed reaction is S-adenosyl-L-methionine + H(+) = S-adenosyl 3-(methylsulfanyl)propylamine + CO2. The protein operates within amine and polyamine biosynthesis; S-adenosylmethioninamine biosynthesis; S-adenosylmethioninamine from S-adenosyl-L-methionine: step 1/1. Catalyzes the decarboxylation of S-adenosylmethionine to S-adenosylmethioninamine (dcAdoMet), the propylamine donor required for the synthesis of the polyamines spermine and spermidine from the diamine putrescine. The polypeptide is S-adenosylmethionine decarboxylase proenzyme (Persephonella marina (strain DSM 14350 / EX-H1)).